A 124-amino-acid chain; its full sequence is Small ribosomal subunit protein uS13 (124 aa).

A compositionally biased stretch (basic residues) spans 92-117 (RRGLPVRGQRTKSNARTRKGPRKTVA). Positions 92 to 124 (RRGLPVRGQRTKSNARTRKGPRKTVANKKIESK) are disordered.

The protein belongs to the universal ribosomal protein uS13 family. Part of the 30S ribosomal subunit. Forms a loose heterodimer with protein S19. Forms two bridges to the 50S subunit in the 70S ribosome.

Its function is as follows. Located at the top of the head of the 30S subunit, it contacts several helices of the 16S rRNA. In the 70S ribosome it contacts the 23S rRNA (bridge B1a) and protein L5 of the 50S subunit (bridge B1b), connecting the 2 subunits; these bridges are implicated in subunit movement. Contacts the tRNAs in the A and P-sites. The sequence is that of Small ribosomal subunit protein uS13 from Mycoplasmoides gallisepticum (strain R(low / passage 15 / clone 2)) (Mycoplasma gallisepticum).